We begin with the raw amino-acid sequence, 760 residues long: MLAELGFIRTIGENDEVPVEPESDSGDEEEEGPIVLGRKQKALQKNRSADFNPDFVFTEKEGMYDGSWALADVMSQLKKKRAATTLDEKIEKVRKRRKAEDKEAKSGKVEEKEGQADSDLKGQENPGEDEAGSKDEDSETDYSSEDEEILTKADTLKVKEKKKKKKGQAAGGFFEDASEYDKSLSFQDMNLSRPLLKAITAMGFKQPTPIQKACIPVGLLGKDICACAATGTGKTAAFALPVLERLIYKPRQAAVTRVLVLVPTRELGIQVHSVTKQLAQFCSITTCLAVGGLDVKSQEAALRAAPDILIATPGRLIDHLHNCPSFHLSSIEVLILDEADRMLDEYFEEQMKEIIRMCSHHRQTMLFSATMTDEVKDLASVSLKNPVRIFVNSNTDVAPFLRQEFIRIRPNREGDREAIVAALLMRTFTDHVMLFTQTKKQAHRMHILLGLLGLQVGELHGNLSQTQRLEALRRFKDEQIDILVATDVAARGLDIEGVKTVINFTMPNTVKHYVHRVGRTARAGRAGRSVSLVGEEERKMLKEIVKAAKAPVKARILPQDVILKFRDKIEKLEKDVYAVLQLEAEEKEMQQSEAQIDTAQRLLAKGKETADQEPERSWFQTKEERKKEKIAKALQEFDLALRGKKKRKKFMKDAKKKGEMTAEERSQFEILKAQMFAERLAKRNRRTKRARAMPEDEPTGPAKKQKQQQKSVFDEELTNTSKKALKQYRAGPSFEERKQSGLPRQRRGNFKSKSRYKRKK.

Residues 1–50 (MLAELGFIRTIGENDEVPVEPESDSGDEEEEGPIVLGRKQKALQKNRSAD) form a disordered region. Over residues 13–32 (ENDEVPVEPESDSGDEEEEG) the composition is skewed to acidic residues. Phosphoserine is present on residues Ser23, Ser25, and Ser48. Positions 55-57 (FVF) match the Required for interaction with the PEBOW complex motif. The tract at residues 80–149 (KRAATTLDEK…TDYSSEDEEI (70 aa)) is disordered. Residues 98-122 (KAEDKEAKSGKVEEKEGQADSDLKG) are compositionally biased toward basic and acidic residues. The segment covering 126-148 (PGEDEAGSKDEDSETDYSSEDEE) has biased composition (acidic residues). Ser133 and Ser144 each carry phosphoserine. The Nuclear localization signal motif lies at 157–166 (KVKEKKKKKK). Residues 184–212 (LSFQDMNLSRPLLKAITAMGFKQPTPIQK) carry the Q motif motif. In terms of domain architecture, Helicase ATP-binding spans 215-389 (IPVGLLGKDI…SVSLKNPVRI (175 aa)). 228 to 235 (AATGTGKT) contributes to the ATP binding site. The DEAD box motif lies at 337–340 (DEAD). In terms of domain architecture, Helicase C-terminal spans 419–569 (IVAALLMRTF…DVILKFRDKI (151 aa)). Disordered regions lie at residues 605–624 (KGKE…TKEE) and 679–760 (RLAK…KRKK). Basic residues-rich tracts occupy residues 682-691 (KRNRRTKRAR) and 744-760 (RQRR…KRKK).

The protein belongs to the DEAD box helicase family. DDX27/DRS1 subfamily. As to quaternary structure, associates with PeBoW complex, composed of BOP1, PES1 and WDR12. Interacts directly with BOP1 and PES1.

Its subcellular location is the nucleus. It localises to the nucleolus. The protein localises to the chromosome. The enzyme catalyses ATP + H2O = ADP + phosphate + H(+). In terms of biological role, probable ATP-dependent RNA helicase. Component of the nucleolar ribosomal RNA (rRNA) processing machinery that regulates 3' end formation of ribosomal 47S rRNA. The chain is Probable ATP-dependent RNA helicase DDX27 (Ddx27) from Mus musculus (Mouse).